The following is a 454-amino-acid chain: tRNA(Ile)-lysidine synthase (454 aa).

Residue 27–32 (SGGSDS) coordinates ATP.

It belongs to the tRNA(Ile)-lysidine synthase family.

The protein resides in the cytoplasm. The enzyme catalyses cytidine(34) in tRNA(Ile2) + L-lysine + ATP = lysidine(34) in tRNA(Ile2) + AMP + diphosphate + H(+). In terms of biological role, ligates lysine onto the cytidine present at position 34 of the AUA codon-specific tRNA(Ile) that contains the anticodon CAU, in an ATP-dependent manner. Cytidine is converted to lysidine, thus changing the amino acid specificity of the tRNA from methionine to isoleucine. The polypeptide is tRNA(Ile)-lysidine synthase (Mesorhizobium japonicum (strain LMG 29417 / CECT 9101 / MAFF 303099) (Mesorhizobium loti (strain MAFF 303099))).